Consider the following 486-residue polypeptide: Cobyric acid synthase (486 aa).

The GATase cobBQ-type domain occupies 248–439 (VLRIVVPALP…LHGLFDTPHA (192 aa)). Cysteine 328 serves as the catalytic Nucleophile. Histidine 431 is an active-site residue.

It belongs to the CobB/CobQ family. CobQ subfamily.

Its pathway is cofactor biosynthesis; adenosylcobalamin biosynthesis. In terms of biological role, catalyzes amidations at positions B, D, E, and G on adenosylcobyrinic A,C-diamide. NH(2) groups are provided by glutamine, and one molecule of ATP is hydrogenolyzed for each amidation. This Burkholderia mallei (strain ATCC 23344) protein is Cobyric acid synthase.